Here is a 188-residue protein sequence, read N- to C-terminus: Elongation factor P (188 aa).

The protein belongs to the elongation factor P family.

It localises to the cytoplasm. It functions in the pathway protein biosynthesis; polypeptide chain elongation. Involved in peptide bond synthesis. Stimulates efficient translation and peptide-bond synthesis on native or reconstituted 70S ribosomes in vitro. Probably functions indirectly by altering the affinity of the ribosome for aminoacyl-tRNA, thus increasing their reactivity as acceptors for peptidyl transferase. This chain is Elongation factor P, found in Rhodopseudomonas palustris (strain HaA2).